We begin with the raw amino-acid sequence, 228 residues long: Urease accessory protein UreF (228 aa).

It belongs to the UreF family. UreD, UreF and UreG form a complex that acts as a GTP-hydrolysis-dependent molecular chaperone, activating the urease apoprotein by helping to assemble the nickel containing metallocenter of UreC. The UreE protein probably delivers the nickel.

The protein resides in the cytoplasm. In terms of biological role, required for maturation of urease via the functional incorporation of the urease nickel metallocenter. This is Urease accessory protein UreF from Blochmanniella pennsylvanica (strain BPEN).